A 475-amino-acid polypeptide reads, in one-letter code: ATP synthase subunit beta (475 aa).

Glycine 152–threonine 159 is an ATP binding site.

Belongs to the ATPase alpha/beta chains family. In terms of assembly, F-type ATPases have 2 components, CF(1) - the catalytic core - and CF(0) - the membrane proton channel. CF(1) has five subunits: alpha(3), beta(3), gamma(1), delta(1), epsilon(1). CF(0) has three main subunits: a(1), b(2) and c(9-12). The alpha and beta chains form an alternating ring which encloses part of the gamma chain. CF(1) is attached to CF(0) by a central stalk formed by the gamma and epsilon chains, while a peripheral stalk is formed by the delta and b chains.

Its subcellular location is the cell membrane. It carries out the reaction ATP + H2O + 4 H(+)(in) = ADP + phosphate + 5 H(+)(out). Functionally, produces ATP from ADP in the presence of a proton gradient across the membrane. The catalytic sites are hosted primarily by the beta subunits. This Wolbachia pipientis wMel protein is ATP synthase subunit beta.